A 279-amino-acid polypeptide reads, in one-letter code: Phosphatidylglycerol--prolipoprotein diacylglyceryl transferase (279 aa).

Helical transmembrane passes span 4–24 (IGPLAIRWYGVLLTLAIFLGY), 44–64 (VVFWAVVFGVVGARLGYVLTS), 76–96 (LYIWHGGLSFHGAILGGGLTF), and 104–124 (GYPLWPYLDAATPGVALGIVA). Residue Arg-126 participates in a 1,2-diacyl-sn-glycero-3-phospho-(1'-sn-glycerol) binding. A run of 3 helical transmembrane segments spans residues 182-202 (LTQVYGAVVGLILLFLSLYWL), 206-226 (PFYGYAFWQFVLWYSVLRSVL), and 245-265 (LGIGLFTATQVVSLPLVLLSL).

Belongs to the Lgt family.

The protein resides in the cell inner membrane. The enzyme catalyses L-cysteinyl-[prolipoprotein] + a 1,2-diacyl-sn-glycero-3-phospho-(1'-sn-glycerol) = an S-1,2-diacyl-sn-glyceryl-L-cysteinyl-[prolipoprotein] + sn-glycerol 1-phosphate + H(+). It functions in the pathway protein modification; lipoprotein biosynthesis (diacylglyceryl transfer). Functionally, catalyzes the transfer of the diacylglyceryl group from phosphatidylglycerol to the sulfhydryl group of the N-terminal cysteine of a prolipoprotein, the first step in the formation of mature lipoproteins. The sequence is that of Phosphatidylglycerol--prolipoprotein diacylglyceryl transferase from Thermus thermophilus (strain ATCC 27634 / DSM 579 / HB8).